We begin with the raw amino-acid sequence, 455 residues long: Hydroxymethylglutaryl-CoA synthase 2 (455 aa).

The active-site Proton donor/acceptor is the Glu86. The Acyl-thioester intermediate role is filled by Cys120. Residues Cys120, Thr161, Ser211, His255, Lys264, Asn329, and Ser363 each contribute to the (3S)-3-hydroxy-3-methylglutaryl-CoA site. The active-site Proton donor/acceptor is the His255.

Belongs to the thiolase-like superfamily. HMG-CoA synthase family.

The enzyme catalyses acetoacetyl-CoA + acetyl-CoA + H2O = (3S)-3-hydroxy-3-methylglutaryl-CoA + CoA + H(+). It participates in metabolic intermediate biosynthesis; (R)-mevalonate biosynthesis; (R)-mevalonate from acetyl-CoA: step 2/3. This enzyme condenses acetyl-CoA with acetoacetyl-CoA to form HMG-CoA, which is the substrate for HMG-CoA reductase. The chain is Hydroxymethylglutaryl-CoA synthase 2 (HMGCS-2) from Blattella germanica (German cockroach).